Reading from the N-terminus, the 134-residue chain is Small ribosomal subunit protein uS9 (134 aa).

The segment at 114–134 (EVERKKYGLKKARRAPQFSKR) is disordered. Residues 120–134 (YGLKKARRAPQFSKR) are compositionally biased toward basic residues.

It belongs to the universal ribosomal protein uS9 family.

The protein is Small ribosomal subunit protein uS9 of Thermotoga sp. (strain RQ2).